The chain runs to 266 residues: Glucagon-1 (266 aa).

The first 20 residues, 1 to 20 (MKSTCYMIGILLMILQNTYQ), serve as a signal peptide directing secretion. 6 propeptides span residues 21 to 50 (SPVP…LKEV), 84 to 95 (SGELSRRNADYE), 136 to 140 (NAEFE), 175 to 178 (IRYS), 213 to 224 (NFSEVHSVEEMD), and 261 to 266 (DLLEEQ). Over residues 23–32 (VPETDANSRS) the composition is skewed to polar residues. Residues 23-44 (VPETDANSRSVKAARNEAVDDS) are disordered.

Belongs to the glucagon family.

The protein resides in the secreted. In terms of biological role, promotes hydrolysis of glycogen and lipids, and raises the blood sugar level. This chain is Glucagon-1 (gcg1), found in Xenopus laevis (African clawed frog).